Here is a 340-residue protein sequence, read N- to C-terminus: Ketol-acid reductoisomerase (NADP(+)) (340 aa).

In terms of domain architecture, KARI N-terminal Rossmann spans 1–182 (MRVYYDRDCD…GGGRSGIIET (182 aa)). NADP(+) contacts are provided by residues 24 to 27 (YGSQ), R48, S51, S53, and 83 to 86 (DELQ). H108 is an active-site residue. Residue G134 coordinates NADP(+). The KARI C-terminal knotted domain maps to 183–329 (NFREECETDL…ETLRGMMPWI (147 aa)). Residues D191, E195, E227, and E231 each contribute to the Mg(2+) site. Residue S252 participates in substrate binding.

This sequence belongs to the ketol-acid reductoisomerase family. It depends on Mg(2+) as a cofactor.

It carries out the reaction (2R)-2,3-dihydroxy-3-methylbutanoate + NADP(+) = (2S)-2-acetolactate + NADPH + H(+). It catalyses the reaction (2R,3R)-2,3-dihydroxy-3-methylpentanoate + NADP(+) = (S)-2-ethyl-2-hydroxy-3-oxobutanoate + NADPH + H(+). It functions in the pathway amino-acid biosynthesis; L-isoleucine biosynthesis; L-isoleucine from 2-oxobutanoate: step 2/4. It participates in amino-acid biosynthesis; L-valine biosynthesis; L-valine from pyruvate: step 2/4. Functionally, involved in the biosynthesis of branched-chain amino acids (BCAA). Catalyzes an alkyl-migration followed by a ketol-acid reduction of (S)-2-acetolactate (S2AL) to yield (R)-2,3-dihydroxy-isovalerate. In the isomerase reaction, S2AL is rearranged via a Mg-dependent methyl migration to produce 3-hydroxy-3-methyl-2-ketobutyrate (HMKB). In the reductase reaction, this 2-ketoacid undergoes a metal-dependent reduction by NADPH to yield (R)-2,3-dihydroxy-isovalerate. The chain is Ketol-acid reductoisomerase (NADP(+)) from Jannaschia sp. (strain CCS1).